Reading from the N-terminus, the 265-residue chain is MPVVSLAQMMESGVHFGHQTRRWNPKMSPYIYTSRNGVHIIDLVQTAHLMDEAYNYMRSQAEQGKKFLFVGTKRQAAGIIAQEAARCGSHYINQRWLGGMLTNWATIKTRVDRLKDLERREESGALDLLPKKEASMLRRELAKLQKYLGGIKTMRKVPDVVVIVDQRREYNAVQECQKLSIPIVSMLDTNCDPDVVDIPIPANDDAIRSIKLIVGKLADAIYEGRHGQLDVEEEYEDYEGAEDDYEYDETEYTDSVIPDDEEEAE.

Residues 231-265 are disordered; it reads VEEEYEDYEGAEDDYEYDETEYTDSVIPDDEEEAE.

Belongs to the universal ribosomal protein uS2 family.

This chain is Small ribosomal subunit protein uS2, found in Trichormus variabilis (strain ATCC 29413 / PCC 7937) (Anabaena variabilis).